We begin with the raw amino-acid sequence, 388 residues long: Mitochondrial distribution and morphology protein 12 (388 aa).

In terms of domain architecture, SMP-LTD spans 1–388; that stretch reads MSLDINWSLL…VFPNFHTVAL (388 aa). Disordered regions lie at residues 75-101 and 209-249; these read DDEG…RNEA and PMSI…KVSS. Residues 83–101 are compositionally biased toward basic and acidic residues; that stretch reads EEKQREKEREERDKLRNEA. A compositionally biased stretch (pro residues) spans 234–243; the sequence is PSPPAHPAGL.

The protein belongs to the MDM12 family. As to quaternary structure, component of the ER-mitochondria encounter structure (ERMES) or MDM complex, composed of MMM1, MDM10, MDM12 and MDM34. An MMM1 homodimer associates with one molecule of MDM12 on each side in a pairwise head-to-tail manner, and the SMP-LTD domains of MMM1 and MDM12 generate a continuous hydrophobic tunnel for phospholipid trafficking.

Its subcellular location is the mitochondrion outer membrane. The protein localises to the endoplasmic reticulum membrane. In terms of biological role, component of the ERMES/MDM complex, which serves as a molecular tether to connect the endoplasmic reticulum (ER) and mitochondria. Components of this complex are involved in the control of mitochondrial shape and protein biogenesis, and function in nonvesicular lipid trafficking between the ER and mitochondria. MDM12 is required for the interaction of the ER-resident membrane protein MMM1 and the outer mitochondrial membrane-resident beta-barrel protein MDM10. The MDM12-MMM1 subcomplex functions in the major beta-barrel assembly pathway that is responsible for biogenesis of all mitochondrial outer membrane beta-barrel proteins, and acts in a late step after the SAM complex. The MDM10-MDM12-MMM1 subcomplex further acts in the TOM40-specific pathway after the action of the MDM12-MMM1 complex. Essential for establishing and maintaining the structure of mitochondria and maintenance of mtDNA nucleoids. This Cryptococcus neoformans var. neoformans serotype D (strain JEC21 / ATCC MYA-565) (Filobasidiella neoformans) protein is Mitochondrial distribution and morphology protein 12.